Consider the following 356-residue polypeptide: Tyrosine recombinase XerS (356 aa).

Positions 16–121 (VMPPYVLEYY…ALSSLYKYLT (106 aa)) constitute a Core-binding (CB) domain. A Tyr recombinase domain is found at 169–354 (GFLDYIDSEY…INEEQKNALD (186 aa)). Residues Arg-210, Lys-234, His-306, Arg-309, and His-332 contribute to the active site. Tyr-341 acts as the O-(3'-phospho-DNA)-tyrosine intermediate in catalysis.

The protein belongs to the 'phage' integrase family. XerS subfamily.

It localises to the cytoplasm. Its activity is regulated as follows. FtsK is required for recombination. In terms of biological role, site-specific tyrosine recombinase, which acts by catalyzing the cutting and rejoining of the recombining DNA molecules. Essential to convert dimers of the bacterial chromosome into monomers to permit their segregation at cell division. Binds an atypical recombination dif site (difSL). Binds preferentially to the left arm and cooperatively to the right arm of difSL. This chain is Tyrosine recombinase XerS, found in Lactococcus lactis subsp. cremoris (strain MG1363).